The following is a 239-amino-acid chain: tRNA (guanine-N(1)-)-methyltransferase (239 aa).

Residues G108 and 127 to 132 (IGDYVL) each bind S-adenosyl-L-methionine.

This sequence belongs to the RNA methyltransferase TrmD family. As to quaternary structure, homodimer.

The protein localises to the cytoplasm. The catalysed reaction is guanosine(37) in tRNA + S-adenosyl-L-methionine = N(1)-methylguanosine(37) in tRNA + S-adenosyl-L-homocysteine + H(+). Its function is as follows. Specifically methylates guanosine-37 in various tRNAs. This chain is tRNA (guanine-N(1)-)-methyltransferase, found in Lactobacillus helveticus (strain DPC 4571).